A 338-amino-acid polypeptide reads, in one-letter code: Purple acid phosphatase 17 (338 aa).

A signal peptide spans 1–31; it reads MNSGRRSLMSATASLSLLLCIFTTFVVVSNG. Position 53 (Asp53) interacts with Fe cation. The N-linked (GlcNAc...) asparagine glycan is linked to Asn61. 2 residues coordinate Fe cation: Asp86 and Tyr89. Residue Asp86 coordinates Zn(2+). The Zn(2+) site is built by Asn124 and His218. His227 (proton donor) is an active-site residue. His253 contributes to the Zn(2+) binding site. 253–255 contacts substrate; the sequence is HDH. Fe cation is bound at residue His255.

The protein belongs to the metallophosphoesterase superfamily. Purple acid phosphatase family. As to quaternary structure, homodimer. Requires Fe cation as cofactor. It depends on Zn(2+) as a cofactor. In terms of tissue distribution, expressed in roots, stems, leaves, flowers and siliques.

The protein resides in the secreted. The catalysed reaction is a phosphate monoester + H2O = an alcohol + phosphate. The enzyme catalyses 2 a phenolic donor + H2O2 = 2 a phenolic radical donor + 2 H2O. Inhibited by phosphate and molybdate. In terms of biological role, metallo-phosphoesterase involved in phosphate metabolism. Has a peroxidase activity. This chain is Purple acid phosphatase 17 (PAP17), found in Arabidopsis thaliana (Mouse-ear cress).